Here is a 427-residue protein sequence, read N- to C-terminus: MESWPWPSGGAWLLVAARALLQLLRADLRLGRPLLAALALLAALDWLCQRLLPPLAALAVLAATGWIVLSRLARPQRLPVATRAVLITGCDSGFGNATAKKLDAMGFTVLATVLDLNSPGALELRACCSSRLQLLQMDLTKPADISRVLEFTKVHTASTGLWGLVNNAGQNIFVADAELCPVATFRTCMEVNFFGALEMTKGLLPLLRRSSGRIVTVSSPAGDMPFPCLAAYGTSKAALALLMGNFSCELLPWGVKVSIILPACFKTESVKDVHQWEERKQQLLATLPQELLQAYGEDYIEHLNGQFLHSLSQALPDLSPVVDAITDALLAAQPRRRYYPGHGLGLIYFIHYYLPEGCGRVSCSPSSSVPMCQEHYRLPAWPYLCPGHSPGPRPQTGPLSHCPVSRAHVEQLQQRRFLVPLLFFQVF.

82-111 (TRAVLITGCDSGFGNATAKKLDAMGFTVLA) lines the NAD(+) pocket. Residue Ser219 participates in substrate binding. Residue Tyr232 is the Proton acceptor of the active site.

Belongs to the short-chain dehydrogenases/reductases (SDR) family. As to quaternary structure, interacts with ligand-free cytoplasmic NR3C2. Highly expressed in the kidney and adrenal and at lower levels in the colon.

It localises to the microsome. The protein localises to the endoplasmic reticulum. It carries out the reaction an 11beta-hydroxysteroid + NAD(+) = an 11-oxosteroid + NADH + H(+). It catalyses the reaction corticosterone + NAD(+) = 11-dehydrocorticosterone + NADH + H(+). The catalysed reaction is cortisol + NAD(+) = cortisone + NADH + H(+). The enzyme catalyses 11beta,17beta-dihydroxyandrost-4-ene-3-one + NAD(+) = 17beta-hydroxyandrost-4-ene-3,11-dione + NADH + H(+). It carries out the reaction 11beta-hydroxyandrost-4-ene-3,17-dione + NAD(+) = androst-4-ene-3,11,17-trione + NADH + H(+). Its pathway is steroid metabolism. Its activity is regulated as follows. Inhibited by glycyrrhetinic acid, carbenoloxone, 11-alpha-OH-progesterone and 11-beta-OH-progesterone. Catalyzes the conversion of biologically active 11beta-hydroxyglucocorticoids (11beta-hydroxysteroid) such as cortisol, to inactive 11-ketoglucocorticoids (11-oxosteroid) such as cortisone, in the presence of NAD(+). Functions as a dehydrogenase (oxidase), thereby decreasing the concentration of active glucocorticoids, thus protecting the nonselective mineralocorticoid receptor from occupation by glucocorticoids. Plays an important role in maintaining glucocorticoids balance during preimplantation and protects the fetus from excessive maternal corticosterone exposure. Catalyzes the oxidation of 11beta-hydroxytestosterone (11beta,17beta-dihydroxyandrost-4-ene-3-one) to 11-ketotestosterone (17beta-hydroxyandrost-4-ene-3,11-dione), a major bioactive androgen. Catalyzes the conversion of 11beta-hydroxyandrostenedione (11beta-hydroxyandrost-4-ene-3,17-dione) to 11-ketoandrostenedione (androst-4-ene-3,11,17-trione), which can be further metabolized to 11-ketotestosterone. Converts 7-beta-25-dihydroxycholesterol to 7-oxo-25-hydroxycholesterol in vitro. 7-beta-25-dihydroxycholesterol (not 7-oxo-25-hydroxycholesterol) acts as a ligand for the G-protein-coupled receptor (GPCR) Epstein-Barr virus-induced gene 2 (EBI2) and may thereby regulate immune cell migration. May protect ovulating oocytes and fertilizing spermatozoa from the adverse effects of cortisol. The chain is 11-beta-hydroxysteroid dehydrogenase type 2 (HSD11B2) from Ovis aries (Sheep).